Reading from the N-terminus, the 274-residue chain is Octanoyltransferase LipM (274 aa).

The BPL/LPL catalytic domain maps to 32–244 (GEVPPTLRFY…GFARALGLTL (213 aa)). Cys-146 (acyl-thioester intermediate) is an active-site residue.

It belongs to the octanoyltransferase LipM family. In terms of assembly, monomer.

It catalyses the reaction octanoyl-[ACP] + L-lysyl-[protein] = N(6)-octanoyl-L-lysyl-[protein] + holo-[ACP] + H(+). It functions in the pathway protein modification; protein lipoylation via endogenous pathway; protein N(6)-(lipoyl)lysine from octanoyl-[acyl-carrier-protein]. Its function is as follows. Catalyzes the transfer of endogenously produced octanoic acid from octanoyl-acyl-carrier-protein onto the lipoyl domain of GcvH, an intermediate carrier during protein lipoylation. The chain is Octanoyltransferase LipM from Symbiobacterium thermophilum (strain DSM 24528 / JCM 14929 / IAM 14863 / T).